A 408-amino-acid chain; its full sequence is Succinylornithine transaminase (408 aa).

The residue at position 252 (Lys-252) is an N6-(pyridoxal phosphate)lysine.

The protein belongs to the class-III pyridoxal-phosphate-dependent aminotransferase family. AstC subfamily. Requires pyridoxal 5'-phosphate as cofactor.

The catalysed reaction is N(2)-succinyl-L-ornithine + 2-oxoglutarate = N-succinyl-L-glutamate 5-semialdehyde + L-glutamate. It functions in the pathway amino-acid degradation; L-arginine degradation via AST pathway; L-glutamate and succinate from L-arginine: step 3/5. In terms of biological role, catalyzes the transamination of N(2)-succinylornithine and alpha-ketoglutarate into N(2)-succinylglutamate semialdehyde and glutamate. Can also act as an acetylornithine aminotransferase. This Salmonella agona (strain SL483) protein is Succinylornithine transaminase.